Reading from the N-terminus, the 295-residue chain is Maintenance of mitochondrial morphology protein 1 (295 aa).

Residues M1 to G12 are Lumenal-facing. A helical membrane pass occupies residues F13 to F33. Residues C34–E295 are Cytoplasmic-facing. The SMP-LTD domain occupies E81–P278.

The protein belongs to the MMM1 family. Homodimer. Component of the ER-mitochondria encounter structure (ERMES) or MDM complex, composed of mmm1, mdm10, mdm12 and mdm34. A mmm1 homodimer associates with one molecule of mdm12 on each side in a pairwise head-to-tail manner, and the SMP-LTD domains of mmm1 and mdm12 generate a continuous hydrophobic tunnel for phospholipid trafficking.

It localises to the endoplasmic reticulum membrane. Functionally, component of the ERMES/MDM complex, which serves as a molecular tether to connect the endoplasmic reticulum (ER) and mitochondria. Components of this complex are involved in the control of mitochondrial shape and protein biogenesis, and function in nonvesicular lipid trafficking between the ER and mitochondria. The mdm12-mmm1 subcomplex functions in the major beta-barrel assembly pathway that is responsible for biogenesis of all outer membrane beta-barrel proteins, and acts in a late step after the SAM complex. The mdm10-mdm12-mmm1 subcomplex further acts in the TOM40-specific pathway after the action of the mdm12-mmm1 complex. Essential for establishing and maintaining the structure of mitochondria and maintenance of mtDNA nucleoids. The protein is Maintenance of mitochondrial morphology protein 1 of Schizosaccharomyces japonicus (strain yFS275 / FY16936) (Fission yeast).